The sequence spans 224 residues: Envelope glycoprotein L (224 aa).

An N-terminal signal peptide occupies residues M1–G16. An interaction with gH region spans residues G20–V161. Positions A23 to L201 constitute a gL alphaherpesvirus-type domain. Disulfide bonds link C44–C76 and C149–C160. The interval P168–N224 is disordered. The segment covering R213–N224 has biased composition (basic residues).

It belongs to the herpesviridae glycoprotein L (gL) family. Alphaherpesvirinae gL subfamily. In terms of assembly, interacts with glycoprotein H (gH); this interaction is necessary for the correct processing and cell surface expression of gH. The heterodimer gH/gL seems to interact with gB trimers during fusion.

The protein resides in the virion membrane. It localises to the host cell membrane. The protein localises to the host Golgi apparatus. Its subcellular location is the host trans-Golgi network. In terms of biological role, the heterodimer glycoprotein H-glycoprotein L is required for the fusion of viral and plasma membranes leading to virus entry into the host cell. Acts as a functional inhibitor of gH and maintains gH in an inhibited form. Upon binding to host integrins, gL dissociates from gH leading to activation of the viral fusion glycoproteins gB and gH. The sequence is that of Envelope glycoprotein L from Homo sapiens (Human).